Here is a 1878-residue protein sequence, read N- to C-terminus: DNA polymerase (1878 aa).

2 disordered regions span residues leucine 691–asparagine 727 and threonine 1839–phenylalanine 1878. Positions alanine 694 to leucine 709 are enriched in acidic residues. The segment covering leucine 710–lysine 723 has biased composition (basic and acidic residues). Residues isoleucine 1868 to phenylalanine 1878 show a composition bias toward low complexity.

It belongs to the DNA polymerase type-B family.

It catalyses the reaction DNA(n) + a 2'-deoxyribonucleoside 5'-triphosphate = DNA(n+1) + diphosphate. The sequence is that of DNA polymerase from Magallana gigas (Pacific oyster).